Reading from the N-terminus, the 588-residue chain is Tripartite motif-containing protein 29 (588 aa).

The disordered stretch occupies residues 1–66; it reads MEAADASRSN…GSALKPGEGR (66 aa). 4 positions are modified to phosphoserine: S21, S28, S58, and S104. Y106 carries the post-translational modification Phosphotyrosine. The B box-type zinc finger occupies 220 to 260; sequence FEARKCPVHGKTMELFCQTDQTCICYLCMFQEHKNHSTVTV. Zn(2+)-binding residues include C225, H228, C247, and H252. Positions 259–352 form a coiled coil; the sequence is TVEEAKAEKE…VKVIMDALDE (94 aa). Phosphothreonine is present on T476. S489 is modified (phosphoserine).

As to quaternary structure, interacts with VIM and HINT1. Interacts with IKBKG/NEMO. Interacts with STING1. In terms of processing, constitutively phosphorylated by PKC on serine/threonine in A431 cells. As to expression, expressed in placenta, prostate and thymus.

It is found in the cytoplasm. The protein localises to the lysosome. Plays a crucial role in the regulation of macrophage activation in response to viral or bacterial infections within the respiratory tract. Mechanistically, TRIM29 interacts with IKBKG/NEMO in the lysosome where it induces its 'Lys-48' ubiquitination and subsequent degradation. In turn, the expression of type I interferons and the production of pro-inflammatory cytokines are inhibited. Additionally, induces the 'Lys-48' ubiquitination of STING1 in a similar way, leading to its degradation. The sequence is that of Tripartite motif-containing protein 29 (TRIM29) from Homo sapiens (Human).